Reading from the N-terminus, the 391-residue chain is Phosphoprotein (391 aa).

Residues threonine 10, threonine 16, and threonine 39 each carry the phosphothreonine modification. Serine 69 is subject to Phosphoserine. 2 disordered regions span residues 82–101 (SSSE…FAQT) and 143–208 (PRTS…PANV). Phosphothreonine is present on residues threonine 91, threonine 150, and threonine 165. Serine 188 is modified (phosphoserine). Positions 198–208 (LPQQDSTPANV) are enriched in polar residues. Positions 218–245 (ANEIMDLLRGMDARLQHLEQKVDKVLAQ) form a coiled coil. Threonine 250 is modified (phosphothreonine). Serine 257 is modified (phosphoserine). A phosphothreonine mark is found at threonine 258 and threonine 282. Residues serine 292 and serine 294 each carry the phosphoserine modification. Position 298 is a phosphothreonine (threonine 298). Phosphoserine occurs at positions 301 and 374. The interaction with the nucleoprotein stretch occupies residues 343-391 (AGRKVMITKMITDCVANPQMKQAFEQRLAKASTEDALNDIKRDIIRSAI). The interval 348–391 (MITKMITDCVANPQMKQAFEQRLAKASTEDALNDIKRDIIRSAI) is x domain (XD). Threonine 375 is subject to Phosphothreonine.

The protein belongs to the rubulavirus/avulavirus P protein family. In terms of assembly, homotetramer. Interacts (via multimerization domain) with polymerase L; this interaction forms the polymerase L-P complex. Interacts (via N-terminus) with N0 (via Ncore); this interaction allows P to chaperon N0 to avoid N polymerization before encapsidation. Interacts (via C-terminus) with N-RNA template; this interaction positions the polymerase on the template for both transcription and replication. Interacts with host RPS6KB1 kinase; this interaction may play a role in the viral replication and transcription.

It localises to the virion. Essential cofactor of the RNA polymerase L that plays a central role in the transcription and replication by forming the polymerase complex with RNA polymerase L and recruiting L to the genomic N-RNA template for RNA synthesis. Also plays a central role in the encapsidation of nascent RNA chains by forming the encapsidation complex with the nucleocapsid protein N (N-P complex). Acts as a chaperone for newly synthesized free N protein, so-called N0, allowing encapsidation of nascent RNA chains during replication. The nucleoprotein protein N prevents excessive phosphorylation of P, which leads to down-regulation of viral transcription/ replication. Participates, together with N, in the formation of viral factories (viroplasms), which are large inclusions in the host cytoplasm where replication takes place. This chain is Phosphoprotein (V/P), found in Mumps orthorubulavirus (MuV).